Consider the following 159-residue polypeptide: SsrA-binding protein (159 aa).

It belongs to the SmpB family.

The protein resides in the cytoplasm. Functionally, required for rescue of stalled ribosomes mediated by trans-translation. Binds to transfer-messenger RNA (tmRNA), required for stable association of tmRNA with ribosomes. tmRNA and SmpB together mimic tRNA shape, replacing the anticodon stem-loop with SmpB. tmRNA is encoded by the ssrA gene; the 2 termini fold to resemble tRNA(Ala) and it encodes a 'tag peptide', a short internal open reading frame. During trans-translation Ala-aminoacylated tmRNA acts like a tRNA, entering the A-site of stalled ribosomes, displacing the stalled mRNA. The ribosome then switches to translate the ORF on the tmRNA; the nascent peptide is terminated with the 'tag peptide' encoded by the tmRNA and targeted for degradation. The ribosome is freed to recommence translation, which seems to be the essential function of trans-translation. In Acidiphilium cryptum (strain JF-5), this protein is SsrA-binding protein.